The sequence spans 1330 residues: Nephrocystin-3 (1330 aa).

A lipid anchor (N-myristoyl glycine) is attached at Gly-2. Positions 83–207 (ELEYAAAEYE…QRLQAQGIQV (125 aa)) form a coiled coil. 11 TPR repeats span residues 471–504 (IPEE…AHEL), 885–918 (CLLN…KSAM), 920–942 (TEYF…MSCL), 943–976 (ADLY…RETA), 985–1018 (AQSL…SENA), 1027–1060 (AREL…HQKA), 1093–1126 (ARTL…RERV), 1135–1168 (AQSL…RRRA), 1177–1210 (AYTV…RQKS), 1219–1252 (ATAL…YEDS), and 1261–1294 (GETL…KEAE). The interval 1296 to 1330 (SLLGGKAPSRHSSSGDTFSLKTAHSPNVFLQQGQR) is disordered. The span at 1305–1330 (RHSSSGDTFSLKTAHSPNVFLQQGQR) shows a compositional bias: polar residues.

In terms of assembly, interacts with NPHP1 and INVS/NPHP2. Interacts (when myristoylated) with UNC119 and UNC119B; interaction is required for localization to cilium. Interacts with CEP164. Component of a complex containing at least ANKS6, INVS, NEK8 and NPHP3. ANKS6 may organize complex assembly by linking INVS and NPHP3 to NEK8 and INVS may target the complex to the proximal ciliary axoneme. In terms of tissue distribution, widely expressed at low level. Expressed in heart, placenta, liver, skeletal muscle, kidney and pancreas. Expressed at very low level in brain and lung.

The protein resides in the cell projection. It localises to the cilium. In terms of biological role, required for normal ciliary development and function. Inhibits disheveled-1-induced canonical Wnt-signaling activity and may also play a role in the control of non-canonical Wnt signaling which regulates planar cell polarity. Probably acts as a molecular switch between different Wnt signaling pathways. Required for proper convergent extension cell movements. This is Nephrocystin-3 (NPHP3) from Homo sapiens (Human).